Consider the following 455-residue polypeptide: Transmembrane protease serine 5 (455 aa).

The Cytoplasmic segment spans residues 1–49 (MSPTLDDQSPMEIRCTEEGAGPGIFRMELGDQRQSISQSQRWCCLQRGC). The chain crosses the membrane as a helical; Signal-anchor for type II membrane protein span at residues 50 to 70 (VILGVLGLLAGAGIASWLLVL). Over 71-455 (YLWPAASPSI…DWIHDTVQVR (385 aa)) the chain is Extracellular. Positions 112–207 (FRINGEDLLL…SGRIVSLKCS (96 aa)) constitute an SRCR domain. 7 disulfides stabilise this stretch: Cys135–Cys196, Cys148–Cys206, Cys209–Cys328, Cys243–Cys259, Cys342–Cys411, Cys374–Cys390, and Cys401–Cys429. Residues Asn163 and Asn170 are each glycosylated (N-linked (GlcNAc...) asparagine). The region spanning 218 to 453 (IVGGQAVASG…FLDWIHDTVQ (236 aa)) is the Peptidase S1 domain. Active-site charge relay system residues include His258 and Asp308. Residues Asn319 and Asn375 are each glycosylated (N-linked (GlcNAc...) asparagine). Ser405 functions as the Charge relay system in the catalytic mechanism.

It belongs to the peptidase S1 family.

Its subcellular location is the cell membrane. Its function is as follows. May play a role in hearing. The chain is Transmembrane protease serine 5 (Tmprss5) from Mus musculus (Mouse).